The sequence spans 395 residues: Tubulin-like protein CetZ1 (395 aa).

GTP contacts are provided by residues 10–14 (QAGGK), 110–112 (GTG), Glu142, Asn169, and Asn187.

Belongs to the CetZ family.

The protein localises to the cytoplasm. In terms of biological role, involved in cell shape control. Essential for the development of a rod-shaped cell type required for efficient swimming. The protein is Tubulin-like protein CetZ1 of Haloferax volcanii (strain ATCC 29605 / DSM 3757 / JCM 8879 / NBRC 14742 / NCIMB 2012 / VKM B-1768 / DS2) (Halobacterium volcanii).